A 154-amino-acid polypeptide reads, in one-letter code: MGLSDQEWQQVLSIWGKVESDLAGHGHQVLMRLFQDHPETLDRFEKFKGLKTPDQMKGSEDLKKHGVTVLTQLGKILKQKGNHESELKPLAQTHATKHKIPVKYLEFISEAIMKVIAEKHAADFGGDSQAAMKKALELFRNDMASKYKEFGFQG.

A Globin domain is found at 2–148 (GLSDQEWQQV…FRNDMASKYK (147 aa)). H65 contributes to the nitrite binding site. H65 lines the O2 pocket. Residue H94 coordinates heme b.

Belongs to the globin family. Monomeric.

The protein resides in the cytoplasm. It is found in the sarcoplasm. It carries out the reaction Fe(III)-heme b-[protein] + nitric oxide + H2O = Fe(II)-heme b-[protein] + nitrite + 2 H(+). It catalyses the reaction H2O2 + AH2 = A + 2 H2O. In terms of biological role, monomeric heme protein which primary function is to store oxygen and facilitate its diffusion within muscle tissues. Reversibly binds oxygen through a pentacoordinated heme iron and enables its timely and efficient release as needed during periods of heightened demand. Depending on the oxidative conditions of tissues and cells, and in addition to its ability to bind oxygen, it also has a nitrite reductase activity whereby it regulates the production of bioactive nitric oxide. Under stress conditions, like hypoxia and anoxia, it also protects cells against reactive oxygen species thanks to its pseudoperoxidase activity. This is Myoglobin (MB) from Cerorhinca monocerata (Rhinoceros auklet).